Here is a 404-residue protein sequence, read N- to C-terminus: Retrotransposable element SLACS 45 kDa protein (404 aa).

2 stretches are compositionally biased toward polar residues: residues 1–11 and 29–41; these read MVRNLRSSEPQ and PALN…QKQV. Disordered stretches follow at residues 1-62, 86-111, 134-251, 317-341, and 369-404; these read MVRN…NTSI, KKAA…GRPP, LGKG…KKGA, CRQQ…GAVS, and PKLP…AGPP. The segment covering 98 to 111 has biased composition (basic and acidic residues); that stretch reads VNKEGNRKKYGRPP. Over residues 141 to 151 the composition is skewed to polar residues; the sequence is TAHTKSNQSRV. The C2H2-type zinc-finger motif lies at 300-321; that stretch reads CPVCGFAHPEETITVTHCRQQH. Residues 395 to 404 are compositionally biased toward basic and acidic residues; the sequence is HHCDRSAGPP.

This Trypanosoma brucei gambiense protein is Retrotransposable element SLACS 45 kDa protein.